Reading from the N-terminus, the 190-residue chain is Peptidyl-tRNA hydrolase (190 aa).

Residue Y17 participates in tRNA binding. Residue H22 is the Proton acceptor of the active site. 2 residues coordinate tRNA: Y67 and N69.

Belongs to the PTH family. Monomer.

The protein resides in the cytoplasm. The catalysed reaction is an N-acyl-L-alpha-aminoacyl-tRNA + H2O = an N-acyl-L-amino acid + a tRNA + H(+). In terms of biological role, hydrolyzes ribosome-free peptidyl-tRNAs (with 1 or more amino acids incorporated), which drop off the ribosome during protein synthesis, or as a result of ribosome stalling. Its function is as follows. Catalyzes the release of premature peptidyl moieties from peptidyl-tRNA molecules trapped in stalled 50S ribosomal subunits, and thus maintains levels of free tRNAs and 50S ribosomes. This chain is Peptidyl-tRNA hydrolase, found in Moorella thermoacetica (strain ATCC 39073 / JCM 9320).